The sequence spans 321 residues: CRISPR-associated endonuclease Cas1 2 (321 aa).

Mn(2+) contacts are provided by Glu-150, His-213, and Glu-228.

It belongs to the CRISPR-associated endonuclease Cas1 family. Homodimer, forms a heterotetramer with a Cas2 homodimer. It depends on Mg(2+) as a cofactor. The cofactor is Mn(2+).

In terms of biological role, CRISPR (clustered regularly interspaced short palindromic repeat), is an adaptive immune system that provides protection against mobile genetic elements (viruses, transposable elements and conjugative plasmids). CRISPR clusters contain spacers, sequences complementary to antecedent mobile elements, and target invading nucleic acids. CRISPR clusters are transcribed and processed into CRISPR RNA (crRNA). Acts as a dsDNA endonuclease. Involved in the integration of spacer DNA into the CRISPR cassette. This chain is CRISPR-associated endonuclease Cas1 2, found in Moorella thermoacetica (strain ATCC 39073 / JCM 9320).